Here is a 336-residue protein sequence, read N- to C-terminus: NmrA-like family domain-containing oxidoreductase FrzB (336 aa).

Lysine 135 is a binding site for NADP(+).

The protein belongs to the NmrA-type oxidoreductase family.

The catalysed reaction is 4-{[(2S,5S)-5-[(4-hydroxyphenyl)methyl]-2,5-dihydropyrazin-2-yl]methyl}phenol + 2 NADPH + 2 H(+) = (S,S)-2,5-di-(p-hydroxybenzyl)piperazine + 2 NADP(+). It functions in the pathway secondary metabolite biosynthesis. Functionally, nmrA-like family domain-containing oxidoreductase; part of the gene cluster that mediates the biosynthesis of the alkaloid (-)-FR901483, a potent immunosuppressant that shows efficacy in animal models and a probable inhibitor of purine nucleotide biosynthesis by targeting phosphoribosylpyrophosphate amidotransferase (PPAT). Within the pathway, FrzB catalyzes the reduction of 4-{[(2S,5S)-5-[(4-hydroxyphenyl)methyl]-2,5-dihydropyrazin-2-yl]methyl}phenol to produce the (S,S)-dityrosyl-piperazine intermediate. The biosynthesis of (-)-FR901483 starts with the condensation of two L-tyrosines to yield (S,S)-dityrosyl-piperazine. This process occurs in 3 steps with the non-canonical nonribosomal peptide synthetase FrzA catalyzing the reduction of L-tyrosine into L-tyrosinal, the spontaneous condensation of 2 L-tyrosinal units, and the subsequent reduction by the NmrA-like family domain-containing oxidoreductase FrzB. The cytochrome P450 monooxygenase FrzC then performs coupling between N10 and C1' to morph the piperazine into a 1,4-diazabicyclo[3.2.1]octane spiro-fused to a 2,5-cyclohexadienone. The dienone portion is further reduced to cyclohexanone by the flavin-dependent reductase FrzD. The methyltranserases (MTs) FrzE and FrzF are then involved in the methylation at the C10' amine and the C4 phenolic oxygen, respectively. The order of the two MTs appear to be interchangeable. Cleavage of the C9-N10' bond by the dioxygenase FrzG then leads to formation of a conjugated iminium. In addition to the oxidation of C9, an additional dehydrogenation between C7 and C8 can occur to give a likely shunt product. The next biosynthetic step is the intramolecular aldol condensation catalyzed by the newly identified aldolase FrzH to yield an aza-tricyclic product with the formation of a C9-C3' bond. The short-chain dehydrogenase/reductase FrzI then produces dephospho-(-)-FR901483 that is phosphorylated at C4'-OH into (-)-FR901483 by the phosphotransferase FrzJ. In Cladobotryum sp, this protein is NmrA-like family domain-containing oxidoreductase FrzB.